The following is a 700-amino-acid chain: AP-1-like transcription factor yap1 (700 aa).

2 disordered regions span residues 17-185 (SPGH…KDLE) and 228-296 (MPVN…VSLR). Residues 34–41 (MPVPGRDT) carry the Bipartite nuclear localization signal motif. The span at 47 to 59 (PSVSNGSQPSAHQ) shows a compositional bias: polar residues. The Bipartite nuclear localization signal motif lies at 67-74 (SPTPEMPP). Over residues 103 to 112 (LDDDDDDASD) the composition is skewed to acidic residues. A compositionally biased stretch (low complexity) spans 127–138 (AGRAAAASASGS). Residues 150 to 185 (GDGKRELSKSERRKEQNRAAQKAFRERREAKVKDLE) show a composition bias toward basic and acidic residues. Residues 156–219 (LSKSERRKEQ…KRLQEENVAL (64 aa)) enclose the bZIP domain. Residues 158-182 (KSERRKEQNRAAQKAFRERREAKVK) are basic motif. Positions 184–191 (LEDKVAEL) are leucine-zipper. Transcription activation regions lie at residues 213–400 (QEEN…QPDS) and 452–577 (LGAT…GRGN). The segment covering 231–244 (NSRNSPNSNNGSFS) has biased composition (low complexity). The segment covering 280 to 296 (SANTISDNSSESLVSLR) has biased composition (polar residues). The n-CRD stretch occupies residues 306 to 318 (FSDHFNTYALGVV). Disordered regions lie at residues 320-359 (VPPPSSSSQPTQKYPSASNGQQSISSNSNSSNVISPPSAD) and 542-609 (NYLN…KATT). 2 stretches are compositionally biased toward low complexity: residues 335 to 358 (SASNGQQSISSNSNSSNVISPPSA) and 542 to 573 (NYLNMSPSPMMPLSNSQSPQSSDSRSNTNVSS). Residues 589–607 (MGSSRTSVSHDSTDLQGKA) are compositionally biased toward polar residues. Residues 642–675 (PSELWMRFGMQHENSTEHLLIDDLCDQMRAKATC) form a c-CRD region. The Nuclear export signal motif lies at 660–667 (LLIDDLCD). Cys-666 and Cys-675 are oxidised to a cystine.

It belongs to the bZIP family. YAP subfamily. Depending on the oxidative stress inducing agent, yap1 can undergo two distinct conformational changes, both involving disulfide bond formation, and both masking the nuclear export signal, thus abolishing nuclear export.

Its subcellular location is the nucleus. The protein localises to the cytoplasm. Functionally, transcription activator involved in oxidative stress response and redox homeostasis. Regulates the transcription of genes encoding antioxidant enzymes and components of the cellular thiol-reducing pathways. Involved in antifungal resistance to fluconazole. The chain is AP-1-like transcription factor yap1 from Cryptococcus neoformans var. grubii serotype A (strain H99 / ATCC 208821 / CBS 10515 / FGSC 9487) (Filobasidiella neoformans var. grubii).